A 430-amino-acid polypeptide reads, in one-letter code: MAAQFYERNTSGMNADRFMTRLTDESTVNTMQRHYWTARQFIRTKLGKKEDEHLEASDNELDTCLNLYRSVHGTSFQLLNNVDNYANFLLDETLVQNVLGKYLKEKGKIDKTEAVGRILIAVGRSLLFSSHRLNAARIGVSTFYNKLSVFVERAIGDCSQTIEAVQMCRTEYRGSLLWMKKTSEELDPEVDGSMEKFREAQTTVKSNKERLDRLKTDTLQKVDLLSASRSNLLSYVLTHYQNELYEYYSKTSRAFETLAENINCYNNYDFEILSHLATGTKPERERKSEKEESAKTSQPRGNEEELKNLLFGRESPQFGEEEVQDESRSQCDSPLIEDVDDERRKTGDLLDLESAASIAFPIGPLATLFDTSSFVPPILPPPKPNAVSDDILSLFDGNKANSSGKEASATTMDWQSLIDGFDRENEDNLL.

Residues 56–260 (ASDNELDTCL…TSRAFETLAE (205 aa)) form the AH domain. The disordered stretch occupies residues 279-342 (GTKPERERKS…SPLIEDVDDE (64 aa)). Residues 281–294 (KPERERKSEKEESA) show a composition bias toward basic and acidic residues.

Interacts with the GTPase activator protein tbc-8; the interaction is direct and may be required for the activation of rab-2 and dense vesicle maturation in cholinergic motoneurons. Interacts with rund-1. Expressed in all neurons. Highly expressed in m2 pharyngeal neurons and some pharyngeal interneurons. Also expressed in the excretory canal and the gland cells located just below the nerve ring in the head.

The protein resides in the cytoplasm. Its subcellular location is the cytoplasmic vesicle membrane. In terms of biological role, may be involved in neurotransmitter secretion. In association with the GTPase activator protein tbc-8 activates rab-2 during dense core vesicle maturation in cholinergic motoneurons. In Caenorhabditis elegans, this protein is Resistance to inhibitors of cholinesterase protein 19.